A 233-amino-acid chain; its full sequence is V-type proton ATPase subunit E (233 aa).

It belongs to the V-ATPase E subunit family. As to quaternary structure, V-ATPase is a heteromultimeric enzyme composed of a peripheral catalytic V1 complex (components A to H) attached to an integral membrane V0 proton pore complex (components: a, c, c', c'' and d).

Its function is as follows. Subunit of the peripheral V1 complex of vacuolar ATPase essential for assembly or catalytic function. V-ATPase is responsible for acidifying a variety of intracellular compartments in eukaryotic cells. The sequence is that of V-type proton ATPase subunit E (vatE) from Dictyostelium discoideum (Social amoeba).